The following is a 146-amino-acid chain: Oxygen-independent coproporphyrinogen III oxidase (146 aa).

Residue Tyr-54 coordinates S-adenosyl-L-methionine. Positions 60 and 64 each coordinate [4Fe-4S] cluster. Phe-66 provides a ligand contact to S-adenosyl-L-methionine. Cys-67 contributes to the [4Fe-4S] cluster binding site. S-adenosyl-L-methionine is bound by residues 111–112 and Glu-143; that span reads GT.

It belongs to the anaerobic coproporphyrinogen-III oxidase family. In terms of assembly, monomer. [4Fe-4S] cluster is required as a cofactor.

The protein resides in the cytoplasm. It carries out the reaction coproporphyrinogen III + 2 S-adenosyl-L-methionine = protoporphyrinogen IX + 2 5'-deoxyadenosine + 2 L-methionine + 2 CO2. It participates in porphyrin-containing compound metabolism; protoporphyrin-IX biosynthesis; protoporphyrinogen-IX from coproporphyrinogen-III (AdoMet route): step 1/1. Functionally, involved in the heme biosynthesis. Catalyzes the anaerobic oxidative decarboxylation of propionate groups of rings A and B of coproporphyrinogen III to yield the vinyl groups in protoporphyrinogen IX. The chain is Oxygen-independent coproporphyrinogen III oxidase (hemN) from Mannheimia haemolytica (Pasteurella haemolytica).